Here is a 454-residue protein sequence, read N- to C-terminus: Mogroside I-E synthase (454 aa).

Catalysis depends on His18, which acts as the Proton acceptor. His18 lines the an anthocyanidin pocket. The Charge relay role is filled by Asp111. His144 is an an anthocyanidin binding site. Cys259 and Cys331 are oxidised to a cystine. UDP-alpha-D-glucose is bound by residues Ser278, Cys331, Gln333, Trp351, Asn352, Ser353, and Glu356. An anthocyanidin is bound at residue Ala371. UDP-alpha-D-glucose contacts are provided by Asp372 and Gln373.

Belongs to the UDP-glycosyltransferase family. In terms of tissue distribution, highly expressed in young fruits 15 days after anthesis (15-DAA).

The enzyme catalyses mogrol + UDP-alpha-D-glucose = mogroside IE + UDP + H(+). It functions in the pathway secondary metabolite biosynthesis; terpenoid biosynthesis. Its activity is regulated as follows. Activity is increased by Mg(2+). Functionally, UDP-glycosyltransferase involved in the biosynthesis of cucurbitacin and mogroside tetracyclic triterpene natural products (e.g. siamenoside I and mogrosides IV, V and VI). Cucurbitacins have cytotoxic properties and exhibit deterrent taste as a defense barrier against herbivores. Mogrosides are nonsugar highly oxygenated compounds used as high-intensity zero-calorie sweeteners; they also possess pharmacological properties such as regulating immunity, lowering blood sugar and lipid levels, protecting the liver, and acting as antioxidants and antitumor agents. Catalyzes the transfer of a glucose moiety to the C-3 hydroxyl of mogrol to form mogroside I-E. Besides mogrol, UGT74AC1 also shows activity in vitro with quercetin and naringenin as substrate. In Siraitia grosvenorii (Monk's fruit), this protein is Mogroside I-E synthase.